Here is a 272-residue protein sequence, read N- to C-terminus: tRNA pseudouridine synthase A (272 aa).

Aspartate 62 functions as the Nucleophile in the catalytic mechanism. Position 120 (tyrosine 120) interacts with substrate.

It belongs to the tRNA pseudouridine synthase TruA family. Homodimer.

The enzyme catalyses uridine(38/39/40) in tRNA = pseudouridine(38/39/40) in tRNA. Functionally, formation of pseudouridine at positions 38, 39 and 40 in the anticodon stem and loop of transfer RNAs. The chain is tRNA pseudouridine synthase A from Nitrosomonas europaea (strain ATCC 19718 / CIP 103999 / KCTC 2705 / NBRC 14298).